Here is an 85-residue protein sequence, read N- to C-terminus: Small ribosomal subunit protein bS16c (85 aa).

The protein belongs to the bacterial ribosomal protein bS16 family.

Its subcellular location is the plastid. It localises to the chloroplast. The chain is Small ribosomal subunit protein bS16c from Cucumis sativus (Cucumber).